Here is a 260-residue protein sequence, read N- to C-terminus: Small ribosomal subunit protein uS2 (260 aa).

It belongs to the universal ribosomal protein uS2 family.

The chain is Small ribosomal subunit protein uS2 from Staphylococcus carnosus (strain TM300).